Reading from the N-terminus, the 270-residue chain is Plasmanylethanolamine desaturase 1 (270 aa).

3 consecutive transmembrane segments (helical) span residues 47–67 (WCSV…LLLL), 74–94 (PLVI…SGLV), and 161–181 (ALEQ…FGTF). The Histidine box-1 motif lies at 186 to 190 (HKWSH). The Histidine box-2 motif lies at 213 to 217 (HHRIH).

It belongs to the fatty acid desaturase CarF family.

It localises to the endoplasmic reticulum membrane. The catalysed reaction is a 1-(1,2-saturated alkyl)-2-acyl-sn-glycero-3-phosphoethanolamine + 2 Fe(II)-[cytochrome b5] + O2 + 2 H(+) = a 1-O-(1Z-alkenyl)-2-acyl-sn-glycero-3-phosphoethanolamine + 2 Fe(III)-[cytochrome b5] + 2 H2O. It carries out the reaction a 1-O-hexadecyl-2-acyl-sn-glycero-3-phosphoethanolamine + 2 Fe(II)-[cytochrome b5] + O2 + 2 H(+) = a 1-O-(1Z-hexadecenyl)-2-acyl-sn-glycero-3-phosphoethanolamine + 2 Fe(III)-[cytochrome b5] + 2 H2O. It catalyses the reaction a 1-O-octadecyl-2-acyl-sn-glycero-3-phosphoethanolamine + 2 Fe(II)-[cytochrome b5] + O2 + 2 H(+) = a 1-O-(1Z-octadecenyl)-2-acyl-sn-glycero-3-phosphoethanolamine + 2 Fe(III)-[cytochrome b5] + 2 H2O. The enzyme catalyses a 1-O-(9Z-octadecenyl)-2-acyl-sn-glycero-3-phosphoethanolamine + 2 Fe(II)-[cytochrome b5] + O2 + 2 H(+) = a 1-O-(1Z,9Z-octadecadienyl)-2-acyl-sn-glycero-3-phosphoethanolamine + 2 Fe(III)-[cytochrome b5] + 2 H2O. It functions in the pathway lipid metabolism; fatty acid metabolism. Functionally, plasmanylethanolamine desaturase involved in plasmalogen biogenesis in the endoplasmic reticulum membrane. Plasmalogens are glycerophospholipids with a hydrocarbon chain linked by a vinyl ether bond at the glycerol sn-1 position, and are involved in antioxidative and signaling mechanisms. This is Plasmanylethanolamine desaturase 1 from Homo sapiens (Human).